A 453-amino-acid polypeptide reads, in one-letter code: uncharacterized protein (453 aa).

This is an uncharacterized protein from Magallana gigas (Pacific oyster).